The chain runs to 130 residues: uncharacterized protein (130 aa).

The disordered stretch occupies residues 1-62 (MRMYSSDAHE…ASGVGSSCKR (62 aa)). Residues 21-30 (PPHPLPPTGS) are compositionally biased toward pro residues.

This is an uncharacterized protein from Homo sapiens (Human).